Reading from the N-terminus, the 880-residue chain is Valine--tRNA ligase (880 aa).

The 'HIGH' region motif lies at 49–59 (PNVTGKLHLGH). The short motif at 525–529 (KMSKS) is the 'KMSKS' region element. Lys528 is a binding site for ATP. The stretch at 809–880 (LEGLINIDEE…VEKRIAELKN (72 aa)) forms a coiled coil.

It belongs to the class-I aminoacyl-tRNA synthetase family. ValS type 1 subfamily. Monomer.

It is found in the cytoplasm. It catalyses the reaction tRNA(Val) + L-valine + ATP = L-valyl-tRNA(Val) + AMP + diphosphate. In terms of biological role, catalyzes the attachment of valine to tRNA(Val). As ValRS can inadvertently accommodate and process structurally similar amino acids such as threonine, to avoid such errors, it has a 'posttransfer' editing activity that hydrolyzes mischarged Thr-tRNA(Val) in a tRNA-dependent manner. This Bacillus licheniformis (strain ATCC 14580 / DSM 13 / JCM 2505 / CCUG 7422 / NBRC 12200 / NCIMB 9375 / NCTC 10341 / NRRL NRS-1264 / Gibson 46) protein is Valine--tRNA ligase.